The following is a 641-amino-acid chain: E3 ubiquitin-protein ligase TRIM47 (641 aa).

An RING-type zinc finger spans residues 9–58 (CPICLEPLREPVTLPCGHNFCLACLGALWPHRSAGGTGGSGGPARCPLCQ). Thr72 carries the post-translational modification Phosphothreonine. The interval 81–123 (QGSVPGPMSAPASGSTRGATPEPSAPSAPPPAPEPSAPCAPEQ) is disordered. The span at 103–118 (PSAPSAPPPAPEPSAP) shows a compositional bias: pro residues. A B box-type zinc finger spans residues 181–221 (LEESLCPRHLRPLERYCRVERVCLCEACATQDHRGHELVPL). Residues Cys186, His189, Cys208, and His213 each contribute to the Zn(2+) site. A coiled-coil region spans residues 305–325 (QGDLRRQEEQRSRLSKARHNL). Position 393 is a phosphoserine (Ser393). A disordered region spans residues 396-416 (DGLQKLGSEDVESQDPDSTSL). Residues 413–634 (STSLLESEAP…LQIGPLKKSC (222 aa)) enclose the B30.2/SPRY domain. Phosphoserine is present on Ser464. Arg585 carries the post-translational modification Omega-N-methylarginine. Ser591 carries the phosphoserine modification.

Belongs to the TRIM/RBCC family. In terms of tissue distribution, expressed in hepatocytes, expression is increased in fatty livers.

It localises to the cytoplasm. Its subcellular location is the nucleus. It carries out the reaction S-ubiquitinyl-[E2 ubiquitin-conjugating enzyme]-L-cysteine + [acceptor protein]-L-lysine = [E2 ubiquitin-conjugating enzyme]-L-cysteine + N(6)-ubiquitinyl-[acceptor protein]-L-lysine.. It functions in the pathway protein modification; protein ubiquitination. E3 ubiquitin-protein ligase that mediates the ubiquitination and proteasomal degradation of CYLD. This Mus musculus (Mouse) protein is E3 ubiquitin-protein ligase TRIM47.